Reading from the N-terminus, the 104-residue chain is Pyrimidine/purine nucleoside phosphorylase (104 aa).

This sequence belongs to the nucleoside phosphorylase PpnP family.

The catalysed reaction is a purine D-ribonucleoside + phosphate = a purine nucleobase + alpha-D-ribose 1-phosphate. It catalyses the reaction adenosine + phosphate = alpha-D-ribose 1-phosphate + adenine. The enzyme catalyses cytidine + phosphate = cytosine + alpha-D-ribose 1-phosphate. It carries out the reaction guanosine + phosphate = alpha-D-ribose 1-phosphate + guanine. The catalysed reaction is inosine + phosphate = alpha-D-ribose 1-phosphate + hypoxanthine. It catalyses the reaction thymidine + phosphate = 2-deoxy-alpha-D-ribose 1-phosphate + thymine. The enzyme catalyses uridine + phosphate = alpha-D-ribose 1-phosphate + uracil. It carries out the reaction xanthosine + phosphate = alpha-D-ribose 1-phosphate + xanthine. Functionally, catalyzes the phosphorolysis of diverse nucleosides, yielding D-ribose 1-phosphate and the respective free bases. Can use uridine, adenosine, guanosine, cytidine, thymidine, inosine and xanthosine as substrates. Also catalyzes the reverse reactions. The chain is Pyrimidine/purine nucleoside phosphorylase from Pelobacter propionicus (strain DSM 2379 / NBRC 103807 / OttBd1).